A 232-amino-acid chain; its full sequence is GDT1-like protein 5 (232 aa).

The next 6 membrane-spanning stretches (helical) occupy residues 13–33 (LAMT…AILA), 40–60 (LVLA…VSLG), 72–92 (THHV…WEGF), 135–155 (PFVL…TFFG), 175–195 (FGVV…AVMG), and 207–227 (MVGL…YLSG).

This sequence belongs to the GDT1 family.

It localises to the membrane. The sequence is that of GDT1-like protein 5 from Oryza sativa subsp. japonica (Rice).